A 178-amino-acid polypeptide reads, in one-letter code: Mediator of RNA polymerase II transcription subunit 28 (178 aa).

Residues methionine 1–threonine 43 are disordered. The span at proline 13 to leucine 23 shows a compositional bias: pro residues. A coiled-coil region spans residues glutamine 109 to aspartate 145.

This sequence belongs to the Mediator complex subunit 28 family. In terms of assembly, forms a ternary complex with NF2/merlin and GRB2. Binds to actin. Component of the Mediator complex, which is probably composed of MED1, MED4, MED6, MED7, MED8, MED9, MED10, MED11, MED12, MED13, MED13L, MED14, MED15, MED16, MED17, MED18, MED19, MED20, MED21, MED22, MED23, MED24, MED25, MED26, MED27, MED29, MED30, MED31, CCNC, CDK8 and CDC2L6/CDK11. The MED12, MED13, CCNC and CDK8 subunits form a distinct module termed the CDK8 module. Mediator containing the CDK8 module is less active than Mediator lacking this module in supporting transcriptional activation. Individual preparations of the Mediator complex lacking one or more distinct subunits have been variously termed ARC, CRSP, DRIP, PC2, SMCC and TRAP.

The protein localises to the nucleus. It is found in the cytoplasm. Its subcellular location is the membrane. In terms of biological role, may be part of a complex containing NF2/merlin that participates in cellular signaling to the actin cytoskeleton downstream of tyrosine kinase signaling pathways. Component of the Mediator complex, a coactivator involved in the regulated transcription of nearly all RNA polymerase II-dependent genes. Mediator functions as a bridge to convey information from gene-specific regulatory proteins to the basal RNA polymerase II transcription machinery. Mediator is recruited to promoters by direct interactions with regulatory proteins and serves as a scaffold for the assembly of a functional preinitiation complex with RNA polymerase II and the general transcription factors. The chain is Mediator of RNA polymerase II transcription subunit 28 (Med28) from Rattus norvegicus (Rat).